The primary structure comprises 231 residues: Probable septum site-determining protein MinC (231 aa).

Residues 101–125 (GKEKAPRPAPTPQAPAQNTTPVTKT) form a disordered region. Residues 114-123 (APAQNTTPVT) show a composition bias toward low complexity.

The protein belongs to the MinC family. Interacts with MinD and FtsZ.

Its function is as follows. Cell division inhibitor that blocks the formation of polar Z ring septums. Rapidly oscillates between the poles of the cell to destabilize FtsZ filaments that have formed before they mature into polar Z rings. Prevents FtsZ polymerization. The sequence is that of Probable septum site-determining protein MinC from Escherichia coli (strain ATCC 8739 / DSM 1576 / NBRC 3972 / NCIMB 8545 / WDCM 00012 / Crooks).